A 672-amino-acid polypeptide reads, in one-letter code: Poly-beta-1,6-N-acetyl-D-glucosamine N-deacetylase (672 aa).

An N-terminal signal peptide occupies residues 1-20 (MLRNGNKYLLMLVSIIMLTA). A lipid anchor (N-palmitoyl cysteine) is attached at cysteine 21. A lipid anchor (S-diacylglycerol cysteine) is attached at cysteine 21. Positions 107–349 (KAVVLTFDDG…IQRVKDMQIS (243 aa)) constitute a NodB homology domain.

This sequence belongs to the polysaccharide deacetylase family.

The protein resides in the cell outer membrane. Its function is as follows. Catalyzes the N-deacetylation of poly-beta-1,6-N-acetyl-D-glucosamine (PGA), a biofilm adhesin polysaccharide. N-deacetylation promotes PGA export through the PgaA porin. The sequence is that of Poly-beta-1,6-N-acetyl-D-glucosamine N-deacetylase (pgaB) from Escherichia coli O157:H7.